Here is a 340-residue protein sequence, read N- to C-terminus: MVAQIKDKLGRPIRDLRISVTDRCNFRCDYCMPKEIFGDDYVFLPKDELLTFEEMVRIAKVYAELGVKKLRITGGEPLLRRNLYQLIAELNQIDGIEDIGMTTNGLLLKKHGQKLYDAGLRRINVSLDAIDNEVFQAINNRNIKATTILDQIDYAVSIGFHVKVNVVIQKGINDDQIIPMVDYFKDKNIEIRFIEFMDVGNDNGWDFSKVVTKNEMLDMIESHFDIEPVPPKYFGEVAKYYKHKDNGAQFGLITSVSASFCSTCTRARLSSDGKFYGCLFSTVEGFNIKSFIRSGVTDDELREQLITLWNVRDDRYSDERTEQTVKNRQRKKINMNYIGG.

The region spanning 8–227 is the Radical SAM core domain; sequence KLGRPIRDLR…DMIESHFDIE (220 aa). A GTP-binding site is contributed by Arg17. Positions 24 and 28 each coordinate [4Fe-4S] cluster. Tyr30 is a binding site for S-adenosyl-L-methionine. Residue Cys31 coordinates [4Fe-4S] cluster. Arg71 is a binding site for GTP. Gly75 lines the S-adenosyl-L-methionine pocket. Residue Thr102 participates in GTP binding. Ser126 is an S-adenosyl-L-methionine binding site. Lys163 serves as a coordination point for GTP. Met197 is a binding site for S-adenosyl-L-methionine. Cys261 and Cys264 together coordinate [4Fe-4S] cluster. GTP is bound at residue 266 to 268; it reads RAR. Cys278 contacts [4Fe-4S] cluster.

The protein belongs to the radical SAM superfamily. MoaA family. In terms of assembly, monomer and homodimer. [4Fe-4S] cluster is required as a cofactor.

It catalyses the reaction GTP + AH2 + S-adenosyl-L-methionine = (8S)-3',8-cyclo-7,8-dihydroguanosine 5'-triphosphate + 5'-deoxyadenosine + L-methionine + A + H(+). It functions in the pathway cofactor biosynthesis; molybdopterin biosynthesis. Its function is as follows. Catalyzes the cyclization of GTP to (8S)-3',8-cyclo-7,8-dihydroguanosine 5'-triphosphate. This chain is GTP 3',8-cyclase, found in Staphylococcus haemolyticus (strain JCSC1435).